Here is a 1692-residue protein sequence, read N- to C-terminus: Flagellar attachment zone protein 1 (1692 aa).

3 coiled-coil regions span residues 613–657 (REQE…KLQK), 684–864 (VTLD…HKVR), and 903–1607 (NDHM…SALE). 37 tandem repeats follow at residues 1012–1025 (EELELKAAENEKLA), 1026–1039 (EELELKAAENEKLA), 1040–1053 (EELELKVAENEKLA), 1054–1067 (EELELKVAENEKLA), 1068–1081 (EELELKAAENEKLA), 1082–1095 (EELELKAAENEKLA), 1096–1109 (EELELKAAENEKLA), 1110–1123 (EELELKAAENEKLA), 1124–1137 (EELELKAAENEKLA), 1138–1151 (EELELKAAENEKLA), 1152–1165 (EELELKAAENEKLA), 1166–1179 (EELELKVAENEKLA), 1180–1193 (EELELKAAENEKLA), 1194–1207 (EELELKVAENEKLA), 1208–1221 (EELELKAAENEKLA), 1222–1235 (EELELKAAENEKLA), 1236–1249 (EELELKAAENEKLA), 1250–1263 (EELELKAAENEKLA), 1264–1277 (EELELKVAENEKLA), 1278–1291 (EELELKAAENEKLA), 1292–1305 (EELELKVAENEKLA), 1306–1319 (EELELKAAENEKLA), 1320–1333 (EELELKVAENEKLA), 1334–1347 (EELELKAAENEKLA), 1348–1361 (EELELKVAENEKLA), 1362–1375 (EELELKAAENEKLA), 1376–1389 (EELELKAAENEKLA), 1390–1403 (EELELKAAENEKLA), 1404–1417 (EELELKAAENEKLA), 1418–1431 (EELELKAAENEKLA), 1432–1445 (EELELKVAENEKLA), 1446–1459 (EELELKAAENEKLA), 1460–1473 (EELELKVAENEKLA), 1474–1487 (EELELKAAENEKLA), 1488–1501 (EELELKAAENEKLA), 1502–1515 (EELELKAAENEKLA), and 1516–1529 (EELELKVAENKRLA). Residues 1012–1529 (EELELKAAEN…LKVAENKRLA (518 aa)) form a 37 X 14 AA tandem repeats of E-E-L-E-L-K-[VA]-A-E-N-E-K-L-A region.

It is found in the cell projection. The protein localises to the cilium. It localises to the flagellum. Functionally, a component of FAZ filament that is required for correct FAZ assembly and attachment. Not essential for new flagellum growth. This Trypanosoma brucei brucei (strain 927/4 GUTat10.1) protein is Flagellar attachment zone protein 1.